A 188-amino-acid chain; its full sequence is Acireductone dioxygenase (188 aa).

The disordered stretch occupies residues 1–20; it reads MSRLRIFADSNPTTPHFDSR. Fe(2+) is bound by residues H97, H99, E103, and H141. Ni(2+)-binding residues include H97, H99, E103, and H141.

This sequence belongs to the acireductone dioxygenase (ARD) family. In terms of assembly, monomer. It depends on Fe(2+) as a cofactor. The cofactor is Ni(2+).

It carries out the reaction 1,2-dihydroxy-5-(methylsulfanyl)pent-1-en-3-one + O2 = 3-(methylsulfanyl)propanoate + CO + formate + 2 H(+). The catalysed reaction is 1,2-dihydroxy-5-(methylsulfanyl)pent-1-en-3-one + O2 = 4-methylsulfanyl-2-oxobutanoate + formate + 2 H(+). It participates in amino-acid biosynthesis; L-methionine biosynthesis via salvage pathway; L-methionine from S-methyl-5-thio-alpha-D-ribose 1-phosphate: step 5/6. Functionally, catalyzes 2 different reactions between oxygen and the acireductone 1,2-dihydroxy-3-keto-5-methylthiopentene (DHK-MTPene) depending upon the metal bound in the active site. Fe-containing acireductone dioxygenase (Fe-ARD) produces formate and 2-keto-4-methylthiobutyrate (KMTB), the alpha-ketoacid precursor of methionine in the methionine recycle pathway. Ni-containing acireductone dioxygenase (Ni-ARD) produces methylthiopropionate, carbon monoxide and formate, and does not lie on the methionine recycle pathway. The protein is Acireductone dioxygenase of Xanthomonas campestris pv. campestris (strain 8004).